A 188-amino-acid chain; its full sequence is Small ribosomal subunit protein uS7 (188 aa).

It belongs to the universal ribosomal protein uS7 family. In terms of assembly, part of the 30S ribosomal subunit.

Functionally, one of the primary rRNA binding proteins, it binds directly to 16S rRNA where it nucleates assembly of the head domain of the 30S subunit. Is located at the subunit interface close to the decoding center. The chain is Small ribosomal subunit protein uS7 from Methanococcus maripaludis (strain C7 / ATCC BAA-1331).